The following is a 530-amino-acid chain: GMP synthase [glutamine-hydrolyzing] (530 aa).

A Glutamine amidotransferase type-1 domain is found at R4–D205. The active-site Nucleophile is the C84. Catalysis depends on residues H179 and E181. A GMPS ATP-PPase domain is found at W206–R398. S233–S239 is a binding site for ATP.

As to quaternary structure, homodimer.

The catalysed reaction is XMP + L-glutamine + ATP + H2O = GMP + L-glutamate + AMP + diphosphate + 2 H(+). Its pathway is purine metabolism; GMP biosynthesis; GMP from XMP (L-Gln route): step 1/1. In terms of biological role, catalyzes the synthesis of GMP from XMP. This is GMP synthase [glutamine-hydrolyzing] from Bordetella avium (strain 197N).